A 318-amino-acid chain; its full sequence is 4-hydroxy-3-methylbut-2-enyl diphosphate reductase (318 aa).

A [4Fe-4S] cluster-binding site is contributed by cysteine 12. Residues histidine 41 and histidine 74 each coordinate (2E)-4-hydroxy-3-methylbut-2-enyl diphosphate. Dimethylallyl diphosphate contacts are provided by histidine 41 and histidine 74. Residues histidine 41 and histidine 74 each contribute to the isopentenyl diphosphate site. Residue cysteine 96 participates in [4Fe-4S] cluster binding. Position 124 (histidine 124) interacts with (2E)-4-hydroxy-3-methylbut-2-enyl diphosphate. Residue histidine 124 coordinates dimethylallyl diphosphate. Position 124 (histidine 124) interacts with isopentenyl diphosphate. Glutamate 126 serves as the catalytic Proton donor. Residue threonine 167 participates in (2E)-4-hydroxy-3-methylbut-2-enyl diphosphate binding. Cysteine 197 provides a ligand contact to [4Fe-4S] cluster. Residues serine 225, serine 226, asparagine 227, and serine 269 each contribute to the (2E)-4-hydroxy-3-methylbut-2-enyl diphosphate site. The dimethylallyl diphosphate site is built by serine 225, serine 226, asparagine 227, and serine 269. Serine 225, serine 226, asparagine 227, and serine 269 together coordinate isopentenyl diphosphate.

The protein belongs to the IspH family. [4Fe-4S] cluster is required as a cofactor.

The enzyme catalyses isopentenyl diphosphate + 2 oxidized [2Fe-2S]-[ferredoxin] + H2O = (2E)-4-hydroxy-3-methylbut-2-enyl diphosphate + 2 reduced [2Fe-2S]-[ferredoxin] + 2 H(+). It carries out the reaction dimethylallyl diphosphate + 2 oxidized [2Fe-2S]-[ferredoxin] + H2O = (2E)-4-hydroxy-3-methylbut-2-enyl diphosphate + 2 reduced [2Fe-2S]-[ferredoxin] + 2 H(+). It functions in the pathway isoprenoid biosynthesis; dimethylallyl diphosphate biosynthesis; dimethylallyl diphosphate from (2E)-4-hydroxy-3-methylbutenyl diphosphate: step 1/1. Its pathway is isoprenoid biosynthesis; isopentenyl diphosphate biosynthesis via DXP pathway; isopentenyl diphosphate from 1-deoxy-D-xylulose 5-phosphate: step 6/6. Functionally, catalyzes the conversion of 1-hydroxy-2-methyl-2-(E)-butenyl 4-diphosphate (HMBPP) into a mixture of isopentenyl diphosphate (IPP) and dimethylallyl diphosphate (DMAPP). Acts in the terminal step of the DOXP/MEP pathway for isoprenoid precursor biosynthesis. This chain is 4-hydroxy-3-methylbut-2-enyl diphosphate reductase, found in Francisella philomiragia subsp. philomiragia (strain ATCC 25017 / CCUG 19701 / FSC 153 / O#319-036).